Consider the following 224-residue polypeptide: 7-cyano-7-deazaguanine synthase (224 aa).

10–20 (LSGGLDSATVV) contributes to the ATP binding site. Zn(2+) contacts are provided by Cys-189, Cys-199, Cys-202, and Cys-205.

It belongs to the QueC family. It depends on Zn(2+) as a cofactor.

It catalyses the reaction 7-carboxy-7-deazaguanine + NH4(+) + ATP = 7-cyano-7-deazaguanine + ADP + phosphate + H2O + H(+). Its pathway is purine metabolism; 7-cyano-7-deazaguanine biosynthesis. Its function is as follows. Catalyzes the ATP-dependent conversion of 7-carboxy-7-deazaguanine (CDG) to 7-cyano-7-deazaguanine (preQ(0)). This chain is 7-cyano-7-deazaguanine synthase, found in Stutzerimonas stutzeri (strain A1501) (Pseudomonas stutzeri).